The sequence spans 37 residues: Large ribosomal subunit protein bL36 (37 aa).

Belongs to the bacterial ribosomal protein bL36 family.

The protein is Large ribosomal subunit protein bL36 of Desulforudis audaxviator (strain MP104C).